We begin with the raw amino-acid sequence, 303 residues long: MIYTVTLNPSVDYIVHVEDFTVGGLNRSSYDTKYPGGKGINVSRLLKRHHVASKALGFVGGFTGEYIKTFLREENLETAFSEVKGDTRINVKLKTGDETEINGQGPTISDEDFKAFLEQFQSLQEGDIVVLAGSIPSSLPHDTYEKIAEACKQQNARVVLDISGEALLKATEMKPFLMKPNHHELGEMFGTAITSVEEAVPYGKKLVEQGAEHVIVSMAGDGALLFTNEAVYFANVPKGKLVNSVGAGDSVVAGFLAGISKQLPLEEAFRLGVTSGSATAFSEELGTEEFVQQLLPEVKVTRL.

Residue 248-249 (GD) coordinates ATP. The active-site Proton acceptor is the D249.

Belongs to the carbohydrate kinase PfkB family.

The enzyme catalyses beta-D-fructose 1-phosphate + ATP = beta-D-fructose 1,6-bisphosphate + ADP + H(+). Catalyzes the ATP-dependent phosphorylation of fructose-l-phosphate to fructose-l,6-bisphosphate. The protein is 1-phosphofructokinase (fruK) of Bacillus subtilis (strain 168).